A 267-amino-acid polypeptide reads, in one-letter code: Coiled-coil domain-containing protein 90B, mitochondrial (267 aa).

The N-terminal 47 residues, 1-47, are a transit peptide targeting the mitochondrion; sequence MKGSQLYRHLSLQGNRLHLHLFQGKKLQLHPSQGHKGTAHRTWKKGF. Positions 142–175 form a coiled coil; it reads LEKSEFATLRAENEKMKIELEHVRQHLLNETNRI. Residues 244–266 form a helical membrane-spanning segment; sequence TVRYMAASVFTCLAIALGFYRLW.

The protein belongs to the CCDC90 family.

The protein resides in the mitochondrion membrane. The protein is Coiled-coil domain-containing protein 90B, mitochondrial (ccdc90b) of Xenopus tropicalis (Western clawed frog).